The chain runs to 1135 residues: Eukaryotic translation initiation factor 3 subunit A (1135 aa).

The 183-residue stretch at 319-501 folds into the PCI domain; the sequence is LQRMAAHVLL…NSIYFGTDLT (183 aa). Composition is skewed to basic and acidic residues over residues 588–623 and 829–899; these read QNNA…EERE and AAEE…RGGD. Disordered stretches follow at residues 588–631 and 829–1135; these read QNNA…QNEI and AAEE…VKRR. A Phosphoserine modification is found at S908. Composition is skewed to basic and acidic residues over residues 920-971, 985-1045, 1053-1081, and 1104-1125; these read ERNE…EPDS, SRDD…EPQR, DAPR…RGDQ, and AREE…KAAD.

Belongs to the eIF-3 subunit A family. As to quaternary structure, component of the eukaryotic translation initiation factor 3 (eIF-3) complex. The eIF-3 complex interacts with pix.

The protein resides in the cytoplasm. Functionally, RNA-binding component of the eukaryotic translation initiation factor 3 (eIF-3) complex, which is involved in protein synthesis of a specialized repertoire of mRNAs and, together with other initiation factors, stimulates binding of mRNA and methionyl-tRNAi to the 40S ribosome. The eIF-3 complex specifically targets and initiates translation of a subset of mRNAs involved in cell proliferation. This is Eukaryotic translation initiation factor 3 subunit A from Drosophila erecta (Fruit fly).